Consider the following 118-residue polypeptide: Autophagy-related protein 8D (118 aa).

Glycine 118 carries the Phosphatidylethanolamine amidated glycine lipid modification.

Belongs to the ATG8 family. In terms of assembly, interacts with ATG4. In terms of processing, the C-terminal Gly is amidated with phosphatidylethanolamine by an activating system similar to that for ubiquitin.

The protein resides in the cytoplasmic vesicle. It localises to the autophagosome membrane. The protein localises to the vacuole membrane. It is found in the cytoplasm. Its subcellular location is the cytoskeleton. In terms of biological role, ubiquitin-like modifier involved in autophagosomes formation. May mediate the delivery of the autophagosomes to the vacuole via the microtubule cytoskeleton. This chain is Autophagy-related protein 8D (ATG8D), found in Oryza sativa subsp. japonica (Rice).